Here is a 325-residue protein sequence, read N- to C-terminus: Transcription initiation factor IIB (325 aa).

A TFIIB-type zinc finger spans residues 19 to 52; that stretch reads NKLWCMVCRIQDPDIIEDYAKGDLICRGCGVVVG. Residues Cys-23, Cys-26, Cys-44, and Cys-47 each contribute to the Zn(2+) site. 2 consecutive repeat copies span residues 131–207 and 227–303.

Belongs to the TFIIB family.

It localises to the nucleus. Functionally, general transcription factor that plays a role in transcription initiation by RNA polymerase II (Pol II). Involved in the pre-initiation complex (PIC) formation and Pol II recruitment at promoter DNA. The chain is Transcription initiation factor IIB (gtf2b) from Dictyostelium discoideum (Social amoeba).